The chain runs to 266 residues: Zinc transporter ZupT (266 aa).

The next 8 helical transmembrane spans lie at 8-28 (LALT…ALMV), 35-55 (FLTF…FVEI), 70-90 (HAAG…IWLI), 123-143 (GIFT…AVFF), 152-172 (GVVI…AVAV), 185-205 (FSYS…GYAL), 209-229 (FLSP…MVYI), and 246-266 (IAIS…LMLA). Residues asparagine 134 and glutamate 137 each contribute to the Fe(2+) site. Zn(2+) contacts are provided by glutamate 137 and histidine 162. Residues asparagine 163, glutamate 166, and glutamate 195 each coordinate Fe(2+). Glutamate 166 serves as a coordination point for Zn(2+).

Belongs to the ZIP transporter (TC 2.A.5) family. ZupT subfamily.

The protein resides in the cell inner membrane. It carries out the reaction Zn(2+)(in) = Zn(2+)(out). Functionally, mediates zinc uptake. May also transport other divalent cations. This Chlorobium limicola (strain DSM 245 / NBRC 103803 / 6330) protein is Zinc transporter ZupT.